The sequence spans 165 residues: Probable chemoreceptor glutamine deamidase CheD (165 aa).

The protein belongs to the CheD family.

It catalyses the reaction L-glutaminyl-[protein] + H2O = L-glutamyl-[protein] + NH4(+). Functionally, probably deamidates glutamine residues to glutamate on methyl-accepting chemotaxis receptors (MCPs), playing an important role in chemotaxis. The polypeptide is Probable chemoreceptor glutamine deamidase CheD (Symbiobacterium thermophilum (strain DSM 24528 / JCM 14929 / IAM 14863 / T)).